We begin with the raw amino-acid sequence, 513 residues long: Bifunctional purine biosynthesis protein PurH (513 aa).

One can recognise an MGS-like domain in the interval 1 to 145; sequence MTKKAIISVY…KNFKYITVII (145 aa).

This sequence belongs to the PurH family.

It catalyses the reaction (6R)-10-formyltetrahydrofolate + 5-amino-1-(5-phospho-beta-D-ribosyl)imidazole-4-carboxamide = 5-formamido-1-(5-phospho-D-ribosyl)imidazole-4-carboxamide + (6S)-5,6,7,8-tetrahydrofolate. It carries out the reaction IMP + H2O = 5-formamido-1-(5-phospho-D-ribosyl)imidazole-4-carboxamide. The protein operates within purine metabolism; IMP biosynthesis via de novo pathway; 5-formamido-1-(5-phospho-D-ribosyl)imidazole-4-carboxamide from 5-amino-1-(5-phospho-D-ribosyl)imidazole-4-carboxamide (10-formyl THF route): step 1/1. It functions in the pathway purine metabolism; IMP biosynthesis via de novo pathway; IMP from 5-formamido-1-(5-phospho-D-ribosyl)imidazole-4-carboxamide: step 1/1. In Caldicellulosiruptor saccharolyticus (strain ATCC 43494 / DSM 8903 / Tp8T 6331), this protein is Bifunctional purine biosynthesis protein PurH.